A 230-amino-acid polypeptide reads, in one-letter code: Claudin-2 (230 aa).

The Cytoplasmic portion of the chain corresponds to 1 to 7 (MASLGLQ). Residues 8-28 (LVGYILGLLGLLGTLVAMLLP) traverse the membrane as a helical segment. Residues 29–81 (SWRTSSYVGTSIVTAVGFSKGLWMECATHSTGITQCDIYSTLLGLPADIQAAQ) lie on the Extracellular side of the membrane. Cys-54 and Cys-64 are oxidised to a cystine. A helical transmembrane segment spans residues 82-102 (AMMVTSSAISSLACIVSVVGM). At 103 to 116 (RCTVFCQDSRAKDR) the chain is on the cytoplasmic side. Residues 117–137 (LAVVGGVFFIIGGLLGFIPVA) traverse the membrane as a helical segment. Residues 138-162 (WNLHGILRDFYSPLVPDSMKFEIGE) lie on the Extracellular side of the membrane. The helical transmembrane segment at 163-183 (ALYLGIISSLFSLVAGIILCF) threads the bilayer. The Cytoplasmic portion of the chain corresponds to 184 to 230 (SCPLQGNRSDYYDSYQAQPLATRGSPRPGQPPKAKSEFNSYSLTGYV). The segment at 205 to 230 (TRGSPRPGQPPKAKSEFNSYSLTGYV) is disordered. Lys-218 participates in a covalent cross-link: Glycyl lysine isopeptide (Lys-Gly) (interchain with G-Cter in SUMO). 2 positions are modified to phosphoserine: Ser-219 and Ser-223. Positions 220 to 230 (EFNSYSLTGYV) are enriched in polar residues. Residues 229–230 (YV) are interaction with TJP1, TJP2 and TJP3.

It belongs to the claudin family. In terms of assembly, can form homo- and heteropolymers with other claudins to mediate paracellular barrier and channel functions of tight junctions in response to physiological stimuli. Homopolymers interact with CLDN3, but not CLDN1, homopolymers. Directly interacts with TJP1/ZO-1, TJP2/ZO-2 and TJP3/ZO-3. Post-translationally, the disulfide bond is necessary for pore formation, but is not required for correct protein trafficking.

The protein localises to the cell junction. It is found in the tight junction. It localises to the cell membrane. It carries out the reaction Na(+)(in) = Na(+)(out). The enzyme catalyses K(+)(in) = K(+)(out). It catalyses the reaction Rb(+)(in) = Rb(+)(out). The catalysed reaction is Li(+)(in) = Li(+)(out). It carries out the reaction Cs(+)(in) = Cs(+)(out). The enzyme catalyses Ca(2+)(in) = Ca(2+)(out). It catalyses the reaction methylamine(out) = methylamine(in). The catalysed reaction is choline(out) = choline(in). It carries out the reaction H2O(in) = H2O(out). Functionally, forms paracellular channels: polymerizes in tight junction strands with cation- and water-selective channels through the strands, conveying epithelial permeability in a process known as paracellular tight junction permeability. In intestinal epithelium, allows for sodium and water fluxes from the peritoneal side to the lumen of the intestine to regulate nutrient absorption and clear enteric pathogens as part of mucosal immune response. In kidney, allows passive sodium and calcium reabsorption across proximal tubules from the lumen back to the bloodstream. In the hepatobiliary tract, allows paracellular water and cation fluxes in the hepatic perivenous areas and biliary epithelium to generate bile flow and maintain osmotic gradients. The sequence is that of Claudin-2 (CLDN2) from Canis lupus familiaris (Dog).